Consider the following 477-residue polypeptide: Aspartyl/glutamyl-tRNA(Asn/Gln) amidotransferase subunit B (477 aa).

The protein belongs to the GatB/GatE family. GatB subfamily. As to quaternary structure, heterotrimer of A, B and C subunits.

The enzyme catalyses L-glutamyl-tRNA(Gln) + L-glutamine + ATP + H2O = L-glutaminyl-tRNA(Gln) + L-glutamate + ADP + phosphate + H(+). It catalyses the reaction L-aspartyl-tRNA(Asn) + L-glutamine + ATP + H2O = L-asparaginyl-tRNA(Asn) + L-glutamate + ADP + phosphate + 2 H(+). Functionally, allows the formation of correctly charged Asn-tRNA(Asn) or Gln-tRNA(Gln) through the transamidation of misacylated Asp-tRNA(Asn) or Glu-tRNA(Gln) in organisms which lack either or both of asparaginyl-tRNA or glutaminyl-tRNA synthetases. The reaction takes place in the presence of glutamine and ATP through an activated phospho-Asp-tRNA(Asn) or phospho-Glu-tRNA(Gln). The polypeptide is Aspartyl/glutamyl-tRNA(Asn/Gln) amidotransferase subunit B (Clostridium tetani (strain Massachusetts / E88)).